Reading from the N-terminus, the 270-residue chain is GTP cyclohydrolase FolE2 (270 aa).

This sequence belongs to the GTP cyclohydrolase IV family.

The catalysed reaction is GTP + H2O = 7,8-dihydroneopterin 3'-triphosphate + formate + H(+). Its pathway is cofactor biosynthesis; 7,8-dihydroneopterin triphosphate biosynthesis; 7,8-dihydroneopterin triphosphate from GTP: step 1/1. Converts GTP to 7,8-dihydroneopterin triphosphate. The protein is GTP cyclohydrolase FolE2 of Cupriavidus pinatubonensis (strain JMP 134 / LMG 1197) (Cupriavidus necator (strain JMP 134)).